The following is a 307-amino-acid chain: METDYDVIIVGAGAAGLSAAQYACRANLRTLVIESKAHGGQALLIDSLENYPGYATPISGFEYAENMKKQAVAFGAQIAYEEVTTIGKRDSVFHITTGTGAYTAMSVILATGAEHRKMGIPGESEFLGRGVSYCATCDGPFFRNKHVVVIGGGDAACDESLVLSRLTDRVTMIHRRDTLRAQKAIAERTLKNPHIAVQWNTTLEAVRGETKVSSVLLKDVKTGETRELACDAVFFFIGMVPITGLLPDAEKDSTGYIVTDDEMRTSVEGIFAAGDVRAKSFRQVITATSDGALAAHAAASYIDTLQN.

34 to 41 (ESKAHGGQ) contacts FAD. Cysteine 134 and cysteine 137 are disulfide-bonded. 275 to 284 (DVRAKSFRQV) contributes to the FAD binding site.

Belongs to the class-II pyridine nucleotide-disulfide oxidoreductase family. In terms of assembly, homodimer. The cofactor is FAD.

Its subcellular location is the cytoplasm. It carries out the reaction [thioredoxin]-dithiol + NADP(+) = [thioredoxin]-disulfide + NADPH + H(+). The protein is Thioredoxin reductase (trxB) of Treponema pallidum (strain Nichols).